A 447-amino-acid polypeptide reads, in one-letter code: Na(+)-translocating NADH-quinone reductase subunit A (447 aa).

Belongs to the NqrA family. Composed of six subunits; NqrA, NqrB, NqrC, NqrD, NqrE and NqrF.

It catalyses the reaction a ubiquinone + n Na(+)(in) + NADH + H(+) = a ubiquinol + n Na(+)(out) + NAD(+). Functionally, NQR complex catalyzes the reduction of ubiquinone-1 to ubiquinol by two successive reactions, coupled with the transport of Na(+) ions from the cytoplasm to the periplasm. NqrA to NqrE are probably involved in the second step, the conversion of ubisemiquinone to ubiquinol. The sequence is that of Na(+)-translocating NADH-quinone reductase subunit A from Haemophilus influenzae (strain PittGG).